Consider the following 313-residue polypeptide: Acetylglutamate kinase (313 aa).

Substrate-binding positions include G84–G85, R106, and N210.

This sequence belongs to the acetylglutamate kinase family. ArgB subfamily.

Its subcellular location is the cytoplasm. It catalyses the reaction N-acetyl-L-glutamate + ATP = N-acetyl-L-glutamyl 5-phosphate + ADP. Its pathway is amino-acid biosynthesis; L-arginine biosynthesis; N(2)-acetyl-L-ornithine from L-glutamate: step 2/4. Catalyzes the ATP-dependent phosphorylation of N-acetyl-L-glutamate. The sequence is that of Acetylglutamate kinase from Gluconacetobacter diazotrophicus (strain ATCC 49037 / DSM 5601 / CCUG 37298 / CIP 103539 / LMG 7603 / PAl5).